The primary structure comprises 533 residues: (E)-beta-farnesene synthase (533 aa).

Residues Asp-286, Asp-290, Asn-430, Ser-434, and Glu-438 each coordinate Mg(2+). The DDXXD motif signature appears at 286-290 (DDMMD).

The protein belongs to the terpene synthase family. The cofactor is Mg(2+). Co(2+) is required as a cofactor. It depends on Mn(2+) as a cofactor.

The protein resides in the cytoplasm. The enzyme catalyses (2E,6E)-farnesyl diphosphate = (E)-beta-farnesene + diphosphate. It participates in secondary metabolite biosynthesis; terpenoid biosynthesis. Sesquiterpene cyclase catalyzing the production of sixfold more beta-farnesene than alpha-bergamotene from farnesyl diphosphate. Involved in indirect defense by producing volatile signals attracting natural enemies of herbivores. The chain is (E)-beta-farnesene synthase from Zea diploperennis (Diploperennial teosinte).